The following is a 508-amino-acid chain: NADH-quinone oxidoreductase subunit N 1 (508 aa).

A run of 13 helical transmembrane segments spans residues 2–22 (ILGPYIAVSPLIVISLGGALL), 47–67 (ALGTAITLLAGAVFSGAVGFV), 87–107 (FTLFFSFVLCLGGALAALLAG), 126–146 (FSTVGAIILAGAGDLLTLFLG), 175–195 (FLLGSFAAALLLYGGALIYGA), 220–240 (ALLLIGAALVLVGLAFKVSAV), 260–280 (FMAVAVKGAAFATLLRVLLGA), 291–311 (AGWPPAVAVMALLTMTVANLI), 321–341 (MLAYSSIAHAGYLLVGVAATV), 351–371 (VMFYLLAYTVSTVGAFGTLIL), 396–416 (ALAFSLFLLSLAGVPPTAGFF), 431–453 (YTLSVALLLNSVLSAYYYLRVLV), and 479–499 (LVVSAVLVMVLGIWPTTSLGI).

The protein belongs to the complex I subunit 2 family. As to quaternary structure, NDH-1 is composed of 14 different subunits. Subunits NuoA, H, J, K, L, M, N constitute the membrane sector of the complex.

The protein resides in the cell inner membrane. The enzyme catalyses a quinone + NADH + 5 H(+)(in) = a quinol + NAD(+) + 4 H(+)(out). NDH-1 shuttles electrons from NADH, via FMN and iron-sulfur (Fe-S) centers, to quinones in the respiratory chain. The immediate electron acceptor for the enzyme in this species is believed to be ubiquinone. Couples the redox reaction to proton translocation (for every two electrons transferred, four hydrogen ions are translocated across the cytoplasmic membrane), and thus conserves the redox energy in a proton gradient. This Sorangium cellulosum (strain So ce56) (Polyangium cellulosum (strain So ce56)) protein is NADH-quinone oxidoreductase subunit N 1.